A 250-amino-acid polypeptide reads, in one-letter code: Small ribosomal subunit protein uS3 (250 aa).

In terms of domain architecture, KH type-2 spans 39-111 (IRTLIKNHYP…KIQINIFEVK (73 aa)).

The protein belongs to the universal ribosomal protein uS3 family. In terms of assembly, part of the 30S ribosomal subunit. Forms a tight complex with proteins S10 and S14.

Its function is as follows. Binds the lower part of the 30S subunit head. Binds mRNA in the 70S ribosome, positioning it for translation. The polypeptide is Small ribosomal subunit protein uS3 (Elm witches'-broom phytoplasma).